Here is a 145-residue protein sequence, read N- to C-terminus: Large ribosomal subunit protein uL15 (145 aa).

The interval 1–50 (MLHTIKPVTNARKSTKRLGRGPGSGTGKTSGKGHKGQLARSGKTLRPGFE) is disordered. Residues 20 to 30 (RGPGSGTGKTS) show a composition bias toward gly residues.

This sequence belongs to the universal ribosomal protein uL15 family. In terms of assembly, part of the 50S ribosomal subunit.

Its function is as follows. Binds to the 23S rRNA. The sequence is that of Large ribosomal subunit protein uL15 from Aster yellows witches'-broom phytoplasma (strain AYWB).